The sequence spans 74 residues: MKLTCVLIITVLFLTACQLTTAVTYSRGEHKHRALMSTGTNYRLPKTCRSSGRYCRSPYDRRRRYCRRITDACV.

The signal sequence occupies residues 1 to 22 (MKLTCVLIITVLFLTACQLTTA). Positions 23 to 46 (VTYSRGEHKHRALMSTGTNYRLPK) are excised as a propeptide. Residues 56–64 (RSPYDRRRR) form an interacts with alpha-9-alpha-10 (CHRNA9-CHRNA10) nAChR region.

Belongs to the conotoxin O1 superfamily. Post-translationally, the native disulfide bond pairing has not been studied. Three isomers may exist: the bead isomer (I-II; III-IV), the globular isomer (I-III; II-IV), the ribbon isomer (I-IV; II-III). They have all been synthesized and their activity tested. All of them show similar potency on alpha-9-alpha-10 (CHRNA9-CHRNA10) nAChR, showing that disulfide bonds does not significantly affect their activity. In addition, removal of disulfide bonds does not affect the activity on alpha-9-alpha-10 (CHRNA9-CHRNA10) nAChR either. As to expression, expressed by the venom duct.

It is found in the secreted. Functionally, alpha-conotoxins act on postsynaptic membranes, they bind to the nicotinic acetylcholine receptors (nAChR) and thus inhibit them. This toxin is very potent on alpha-9-alpha-10/CHRNA9-CHRNA10 nAChR (IC(50)=4.61-12 nM for the bead isomer (I-II; III-IV), IC(50)=7-16 nM for the ribbon isomer (I-IV; II-III) and IC(50)=22.7 nM for the globular isomer (I-III; II-IV)). The bead isomer also shows a weak inhibition on other nAChRs (alpha-1-beta-1-delta-epsilon/CHRNA1-CHRNB1-CHRND-CHRNE, alpha-7/CHRNA7, alpha-6/alpha-3-beta-2-beta-3 (CHRNA6/CHRNA3-CHRNB2-CHRNB3), alpha-3-beta-2/CHRNA3-CHRNB2, alpha-2-beta-2/CHRNA2-CHRNB2, alpha-6/alpha-3-beta-4 (CHRNA6/CHRNA3-CHRNB4), alpha-4-beta-2/CHRNA4-CHRNB2, alpha-4-beta-4/CHRNA4-CHRNB4, alpha-2-beta-4/CHRNA2-CHRNB4, alpha-3-beta-4/CHRNA3-CHRNB4). The toxin blockade is voltage-dependent, and its binding site does not overlap with the binding site of the competitive antagonist alpha-conotoxin RgIA. The toxin inhibits Sf9 cell growth. Both the bead and ribbon isomers relieve pain effects in the rat chronic constriction injury (CCI) model of neuropathic pain, and in the acute pain model of tail flick test, but have no effect on motor performance. The protein is Alpha-conotoxin GeXIVA of Conus generalis (General cone).